The following is a 373-amino-acid chain: Diels-Alderase (373 aa).

It belongs to the Diels-Alderase family.

The catalysed reaction is (5S)-3-[(2E,6R,8E,10E,12E)-2,6-dimethyltetradeca-2,8,10,12-tetraenoyl]-5-(hydroxymethyl)pyrrolidine-2,4-dione = trichosetin. Its pathway is mycotoxin biosynthesis. Hybrid PKS-NRPS synthetase; part of the gene cluster that mediates the biosynthesis of trichosetin, a trans-fused decalin-containing tetramic acid with antimicrobial activity. The PKS module of PKS-NRPS1 together with the enoylreductase (ER) catalyze the formation of the polyketide unit which is then conjugated to L-serine by the condensation domain of the PKS-NRPS1 NRPS module. Activity of the Dieckmann cyclase domain (RED) results in release of the Dieckmann product intermediate. Diels-Alderase (DA) is involved in endo-selective Diels-Alder cycloaddition to form the decalin ring, leading to the production of N-desmethylequisetin also called trichosetin. The cluster does not contain the equisetin N-methyltransferase and consequently, trichosetin is isolated as final product. The chain is Diels-Alderase from Gibberella fujikuroi (strain CBS 195.34 / IMI 58289 / NRRL A-6831) (Bakanae and foot rot disease fungus).